The chain runs to 505 residues: Maturase K (505 aa).

Belongs to the intron maturase 2 family. MatK subfamily.

The protein resides in the plastid. Its subcellular location is the chloroplast. Its function is as follows. Usually encoded in the trnK tRNA gene intron. Probably assists in splicing its own and other chloroplast group II introns. The polypeptide is Maturase K (Nuphar variegata (Yellow pond lily)).